The chain runs to 201 residues: Regulator of G-protein signaling 16 (201 aa).

2 S-palmitoyl cysteine lipidation sites follow: cysteine 2 and cysteine 12. In terms of domain architecture, RGS spans 64–180 (SFDLLLNSKN…LKSPAYRDLA (117 aa)). Phosphotyrosine; by EGFR is present on tyrosine 167. Tyrosine 176 carries the post-translational modification Phosphotyrosine. The segment at 181–201 (AQASATSTSAPSGSPAEPSHT) is disordered.

As to quaternary structure, interacts with GNAI1 and GNAQ. Interacts with GNAI3, GNAI3 and GNAO1. In terms of processing, palmitoylated on Cys-2 and/or Cys-12. Post-translationally, phosphorylated. Phosphorylation at Tyr-167 by EGFR enhances GTPase accelerating (GAP) activity toward GNAI1. Retinal; also predominantly expressed in the liver and pituitary.

The protein localises to the membrane. Functionally, regulates G protein-coupled receptor signaling cascades. Inhibits signal transduction by increasing the GTPase activity of G protein alpha subunits, thereby driving them into their inactive GDP-bound form. Plays an important role in the phototransduction cascade by regulating the lifetime and effective concentration of activated transducin alpha. May regulate extra and intracellular mitogenic signals. The chain is Regulator of G-protein signaling 16 (Rgs16) from Mus musculus (Mouse).